The chain runs to 335 residues: Dihydroorotate dehydrogenase (quinone) (335 aa).

Residues alanine 58–lysine 62 and threonine 82 contribute to the FMN site. Lysine 62 serves as a coordination point for substrate. A substrate-binding site is contributed by asparagine 107 to phenylalanine 111. 2 residues coordinate FMN: asparagine 135 and asparagine 168. Asparagine 168 lines the substrate pocket. The active-site Nucleophile is the serine 171. Asparagine 173 is a binding site for substrate. Positions 213 and 241 each coordinate FMN. Position 242-243 (asparagine 242–threonine 243) interacts with substrate. Residues glycine 264, glycine 293, and tyrosine 314–serine 315 each bind FMN.

The protein belongs to the dihydroorotate dehydrogenase family. Type 2 subfamily. Monomer. It depends on FMN as a cofactor.

The protein resides in the cell membrane. It catalyses the reaction (S)-dihydroorotate + a quinone = orotate + a quinol. It participates in pyrimidine metabolism; UMP biosynthesis via de novo pathway; orotate from (S)-dihydroorotate (quinone route): step 1/1. Its function is as follows. Catalyzes the conversion of dihydroorotate to orotate with quinone as electron acceptor. The sequence is that of Dihydroorotate dehydrogenase (quinone) from Haemophilus ducreyi (strain 35000HP / ATCC 700724).